Here is a 319-residue protein sequence, read N- to C-terminus: tRNA-cytidine(32) 2-sulfurtransferase (319 aa).

The short motif at 49–54 (SGGKDS) is the PP-loop motif element. Residues cysteine 124, cysteine 127, and cysteine 215 each contribute to the [4Fe-4S] cluster site. Residues 276-319 (DGDTAFDKEEFRDPAPDADDVEDAPKKRTISILDSRGKESGCGA) are disordered. 2 stretches are compositionally biased toward basic and acidic residues: residues 280–290 (AFDKEEFRDPA) and 310–319 (SRGKESGCGA).

This sequence belongs to the TtcA family. Homodimer. Mg(2+) serves as cofactor. The cofactor is [4Fe-4S] cluster.

The protein localises to the cytoplasm. It catalyses the reaction cytidine(32) in tRNA + S-sulfanyl-L-cysteinyl-[cysteine desulfurase] + AH2 + ATP = 2-thiocytidine(32) in tRNA + L-cysteinyl-[cysteine desulfurase] + A + AMP + diphosphate + H(+). The protein operates within tRNA modification. Catalyzes the ATP-dependent 2-thiolation of cytidine in position 32 of tRNA, to form 2-thiocytidine (s(2)C32). The sulfur atoms are provided by the cysteine/cysteine desulfurase (IscS) system. This chain is tRNA-cytidine(32) 2-sulfurtransferase, found in Chromobacterium violaceum (strain ATCC 12472 / DSM 30191 / JCM 1249 / CCUG 213 / NBRC 12614 / NCIMB 9131 / NCTC 9757 / MK).